The chain runs to 519 residues: SMR domain-containing protein At5g58720 (519 aa).

A compositionally biased stretch (basic residues) spans 1 to 15 (MKQKNQHKKKKKRSC). 2 disordered regions span residues 1–47 (MKQK…REIE) and 92–128 (ESGD…CSED). Positions 28–47 (GNKKDVEEERKDGEGKREIE) are enriched in basic and acidic residues. Residues 98–127 (STSSVASGSSGQETASTSEYGAGSSSSCSE) are compositionally biased toward low complexity. The region spanning 428–502 (IDLHGQHVKP…NRGTLLIKLD (75 aa)) is the Smr domain.

Interacts with PRL1.

The protein is SMR domain-containing protein At5g58720 of Arabidopsis thaliana (Mouse-ear cress).